Reading from the N-terminus, the 341-residue chain is Heat-inducible transcription repressor HrcA (341 aa).

Belongs to the HrcA family.

In terms of biological role, negative regulator of class I heat shock genes (grpE-dnaK-dnaJ and groELS operons). Prevents heat-shock induction of these operons. The protein is Heat-inducible transcription repressor HrcA of Leptothrix cholodnii (strain ATCC 51168 / LMG 8142 / SP-6) (Leptothrix discophora (strain SP-6)).